The primary structure comprises 101 residues: Small ribosomal subunit protein uS14 (101 aa).

The protein belongs to the universal ribosomal protein uS14 family. As to quaternary structure, part of the 30S ribosomal subunit. Contacts proteins S3 and S10.

Binds 16S rRNA, required for the assembly of 30S particles and may also be responsible for determining the conformation of the 16S rRNA at the A site. This is Small ribosomal subunit protein uS14 from Polaromonas sp. (strain JS666 / ATCC BAA-500).